We begin with the raw amino-acid sequence, 359 residues long: Guanine nucleotide-binding protein subunit alpha-11 (359 aa).

2 S-palmitoyl cysteine lipidation sites follow: Cys9 and Cys10. Residues 38-359 form the G-alpha domain; sequence RELKLLLLGT…QLNLKEYNLV (322 aa). The G1 motif stretch occupies residues 41–54; sequence KLLLLGTGESGKST. Residues 46-53 and 180-183 each bind GTP; these read GTGESGKS and LRVR. Ser53 is a Mg(2+) binding site. The G2 motif stretch occupies residues 178-186; that stretch reads DVLRVRVPT. Thr186 contacts Mg(2+). The segment at 201–210 is G3 motif; that stretch reads FRMVDVGGQR. A G4 motif region spans residues 270–277; sequence ILFLNKKD. GTP is bound by residues 274–277 and Ala331; that span reads NKKD. The tract at residues 329-334 is G5 motif; sequence TCATDT.

It belongs to the G-alpha family. G(q) subfamily. In terms of assembly, g proteins are composed of 3 units; alpha, beta and gamma. The alpha chain contains the guanine nucleotide binding site. Interacts with RGS22. Interacts with NTSR1.

It localises to the cell membrane. It is found in the cytoplasm. The catalysed reaction is GTP + H2O = GDP + phosphate + H(+). Functionally, guanine nucleotide-binding proteins (G proteins) function as transducers downstream of G protein-coupled receptors (GPCRs) in numerous signaling cascades. The alpha chain contains the guanine nucleotide binding site and alternates between an active, GTP-bound state and an inactive, GDP-bound state. Signaling by an activated GPCR promotes GDP release and GTP binding. The alpha subunit has a low GTPase activity that converts bound GTP to GDP, thereby terminating the signal. Both GDP release and GTP hydrolysis are modulated by numerous regulatory proteins. Signaling is mediated via phospholipase C-beta-dependent inositol lipid hydrolysis for signal propagation: activates phospholipase C-beta: following GPCR activation, GNA11 activates PLC-beta (PLCB1, PLCB2, PLCB3 or PLCB4), leading to production of diacylglycerol (DAG) and inositol 1,4,5-trisphosphate (IP3). Transduces FFAR4 signaling in response to long-chain fatty acids (LCFAs). Together with GNAQ, required for heart development. In the respiratory epithelium, transmits OXGR1-dependent signals that lead to downstream intracellular Ca(2+) release and mucocilliary clearance of airborne pathogens. The protein is Guanine nucleotide-binding protein subunit alpha-11 (Gna11) of Mus musculus (Mouse).